Here is a 439-residue protein sequence, read N- to C-terminus: Amino-acid acetyltransferase (439 aa).

One can recognise an N-acetyltransferase domain in the interval glutamate 289–lysine 429.

It belongs to the acetyltransferase family. ArgA subfamily.

It is found in the cytoplasm. It carries out the reaction L-glutamate + acetyl-CoA = N-acetyl-L-glutamate + CoA + H(+). Its pathway is amino-acid biosynthesis; L-arginine biosynthesis; N(2)-acetyl-L-ornithine from L-glutamate: step 1/4. The protein is Amino-acid acetyltransferase of Mannheimia succiniciproducens (strain KCTC 0769BP / MBEL55E).